The sequence spans 542 residues: Prolyl 4-hydroxylase subunit alpha-3 (542 aa).

The N-terminal stretch at 1–24 (MGPGARLALLALLALGGDPAAATG) is a signal peptide. The stretch at 105–129 (LEATENIRALKDGYEKVEQDLPAFE) forms a coiled coil. One copy of the TPR repeat lies at 225–258 (EDALDYLAFACFQVGNVSCALSLSREFLVYSPDN). N240 is a glycosylation site (N-linked (GlcNAc...) asparagine). One can recognise a Fe2OG dioxygenase domain in the interval 420–527 (YAEYLQVVNY…KWVANKWIHE (108 aa)). Positions 438 and 440 each coordinate Fe cation. The N-linked (GlcNAc...) asparagine glycan is linked to N480. H508 lines the Fe cation pocket. K518 is a binding site for 2-oxoglutarate.

This sequence belongs to the P4HA family. In terms of assembly, heterotetramer of two alpha-3 chains and two beta chains (the beta chain is the multi-functional PDI). Requires Fe(2+) as cofactor. L-ascorbate serves as cofactor. N-glycosylation plays no role in the catalytic activity.

It localises to the endoplasmic reticulum lumen. It catalyses the reaction L-prolyl-[collagen] + 2-oxoglutarate + O2 = trans-4-hydroxy-L-prolyl-[collagen] + succinate + CO2. In terms of biological role, catalyzes the post-translational formation of 4-hydroxyproline in -Xaa-Pro-Gly- sequences in collagens and other proteins. In Mus musculus (Mouse), this protein is Prolyl 4-hydroxylase subunit alpha-3 (P4ha3).